A 554-amino-acid chain; its full sequence is MELCTQTVAADHEVIITRRSGSHHPTLWGDHFLAYADLRGANEGEEKQNEDLKEEVRKMLVMAPSNSLEKLELINTIQCLGLAYHFQSEIDESLSYMYTHYEEYSIGDLHAIALCFRLLRQQGYYVSCDAFKKFTNDQGNFKEELVKDVEGMLSLYEAAQFRVHGEQILDEALNFTITKLKQILPKLSNSQLAQQITNALKFPIKDGIVRVETRKYISFYQQNQNHNQVLLNFAKLDFNILQTLHKKELSDMTRWWKKMELVNTLPYARDRLVECYFWCLGTYFEPQYSVARKMLTKISFFISIIDDTYDIYGKLDELTLFTQAIERWNIDASEQLPLYMKIIYRDLLDVYDEIEKELANENKSFLVNYSINEMKKVVRGYFQEAKWYYGKKVPKMEQYMKNAISTSAYILLTTTSWLAMGNVATKDVFDWVATEPKLVVASCHIIRLLNDLVSHEEEQKRGNAASAVECYMNEYSVTQEEAHVKIRDIIENYWKDLNEEYFKVDMIIIPRVLLMCIINLTRVAEFIYKDEDAYTFSKNNLKDVISDILVDPII.

Residues Asp-306, Asp-310, and Glu-458 each contribute to the Mg(2+) site. The DDXXD motif signature appears at 306–310 (DDTYD).

It belongs to the terpene synthase family. Tpsa subfamily. Mg(2+) serves as cofactor. It depends on Mn(2+) as a cofactor.

The enzyme catalyses (2E,6E)-farnesyl diphosphate = (+)-valencene + diphosphate. It carries out the reaction (2E,6E)-farnesyl diphosphate = (E)-beta-farnesene + diphosphate. It catalyses the reaction (2E,6E)-farnesyl diphosphate = gamma-gurjunene + diphosphate. The catalysed reaction is (2Z,6Z)-farnesyl diphosphate = beta-bisabolene + diphosphate. The enzyme catalyses (2Z,6Z)-farnesyl diphosphate = (E)-gamma-bisabolene + diphosphate. It carries out the reaction (2E)-geranyl diphosphate = limonene + diphosphate. It catalyses the reaction (2E)-geranyl diphosphate = beta-myrcene + diphosphate. The catalysed reaction is (2E)-geranyl diphosphate = (E)-beta-ocimene + diphosphate. The enzyme catalyses (2E)-geranyl diphosphate = terpinolene + diphosphate. It carries out the reaction (2E)-geranyl diphosphate = gamma-terpinene + diphosphate. It catalyses the reaction (2Z,6Z)-farnesyl diphosphate = (Z)-gamma-bisabolene + diphosphate. The catalysed reaction is (2E,6E)-farnesyl diphosphate = (1S,5S,6R)-alpha-bergamotene + diphosphate. The enzyme catalyses (2Z,6Z)-farnesyl diphosphate = (1S,5S,6S)-alpha-bergamotene + diphosphate. It functions in the pathway secondary metabolite biosynthesis; terpenoid biosynthesis. Sesquiterpene synthase involved in the biosynthesis of volatile compounds. Mediates the conversion of (2E,6E)-farnesyl diphosphate (FPP) into gamma-gurjunene, (E)-beta-farnesene and (+)-valencene, and of (2Z,6Z)-farnesyl diphosphate ((ZZ)-FPP) into (E)-alpha-bergamotene and (Z)-gamma-bisabolene as well as beta-bisabolene, (Z)-alpha-bergamotene and (E)-gamma-bisabolene to a lower extent. Can act with a low efficiency as a monoterpene synthase with geranyl diphosphate (GPP) as substrate, thus producing beta-myrcene, (E)-beta-ocimene, limonene, terpinolene, gamma-terpinene and (Z)-beta-ocimene. The polypeptide is Terpene synthase 17 (Solanum habrochaites (Wild tomato)).